We begin with the raw amino-acid sequence, 179 residues long: Peptide deformylase (179 aa).

2 residues coordinate Fe cation: C103 and H145. E146 is a catalytic residue. Residue H149 participates in Fe cation binding.

The protein belongs to the polypeptide deformylase family. Fe(2+) is required as a cofactor.

It catalyses the reaction N-terminal N-formyl-L-methionyl-[peptide] + H2O = N-terminal L-methionyl-[peptide] + formate. In terms of biological role, removes the formyl group from the N-terminal Met of newly synthesized proteins. Requires at least a dipeptide for an efficient rate of reaction. N-terminal L-methionine is a prerequisite for activity but the enzyme has broad specificity at other positions. This is Peptide deformylase from Leptospira biflexa serovar Patoc (strain Patoc 1 / Ames).